Here is a 277-residue protein sequence, read N- to C-terminus: 2,5-diketo-D-gluconic acid reductase B (277 aa).

Residue tyrosine 51 is the Proton donor of the active site. Histidine 109 contacts substrate. Residue serine 189–asparagine 242 coordinates NADP(+).

This sequence belongs to the aldo/keto reductase family.

The protein localises to the cytoplasm. The enzyme catalyses 2-dehydro-D-gluconate + NADP(+) = 2,5-didehydro-D-gluconate + NADPH + H(+). Functionally, catalyzes the reduction of 2,5-diketo-D-gluconic acid (25DKG) to 2-keto-L-gulonic acid (2KLG). 25DKGR-B has higher catalytic efficiency than 25DKGR-A. In Corynebacterium sp. (strain SHS752001), this protein is 2,5-diketo-D-gluconic acid reductase B (dkgB).